The chain runs to 393 residues: 8-amino-7-oxononanoate synthase (393 aa).

A pyridoxal 5'-phosphate-binding site is contributed by 107 to 108 (GF). His-132 is a substrate binding site. Residues Ser-180, 205–208 (DDAH), and 236–239 (TLSK) each bind pyridoxal 5'-phosphate. The residue at position 239 (Lys-239) is an N6-(pyridoxal phosphate)lysine. Residue Thr-353 participates in substrate binding.

Belongs to the class-II pyridoxal-phosphate-dependent aminotransferase family. BioF subfamily. In terms of assembly, homodimer. The cofactor is pyridoxal 5'-phosphate.

The enzyme catalyses 6-carboxyhexanoyl-[ACP] + L-alanine + H(+) = (8S)-8-amino-7-oxononanoate + holo-[ACP] + CO2. It functions in the pathway cofactor biosynthesis; biotin biosynthesis. Its function is as follows. Catalyzes the decarboxylative condensation of pimeloyl-[acyl-carrier protein] and L-alanine to produce 8-amino-7-oxononanoate (AON), [acyl-carrier protein], and carbon dioxide. This is 8-amino-7-oxononanoate synthase from Coprothermobacter proteolyticus (strain ATCC 35245 / DSM 5265 / OCM 4 / BT).